A 475-amino-acid polypeptide reads, in one-letter code: uncharacterized protein (475 aa).

It to E.coli YihN.

This is an uncharacterized protein from Mycoplasma pneumoniae (strain ATCC 29342 / M129 / Subtype 1) (Mycoplasmoides pneumoniae).